A 432-amino-acid polypeptide reads, in one-letter code: Putative O-antigen transporter (432 aa).

The next 12 helical transmembrane spans lie at 14–34 (IIAA…LVSV), 47–67 (AVFT…IGIG), 90–110 (AAVH…FFLS), 134–154 (FIAS…KILF), 164–184 (IINA…HYLM), 189–209 (ITFA…IYIS), 234–254 (GFLI…IVMS), 271–291 (IFGL…PVCA), 305–325 (IIFL…LFIY), 334–354 (IIAN…LAVY), 376–396 (ILWL…WYFA), and 400–420 (GIVG…FWGL).

It localises to the cell inner membrane. Its pathway is bacterial outer membrane biogenesis; LPS O-antigen biosynthesis. Its function is as follows. May be involved in the translocation process of the nascent O-polysaccharide molecules and/or its ligation to lipid A core units. This is Putative O-antigen transporter (rfbX) from Salmonella typhi.